Here is a 246-residue protein sequence, read N- to C-terminus: Probable transcriptional regulatory protein SPO1072 (246 aa).

The disordered stretch occupies residues 1–22 (MAGHSKWANIQHRKGRQDAARS).

The protein belongs to the TACO1 family.

The protein resides in the cytoplasm. The protein is Probable transcriptional regulatory protein SPO1072 of Ruegeria pomeroyi (strain ATCC 700808 / DSM 15171 / DSS-3) (Silicibacter pomeroyi).